Reading from the N-terminus, the 347-residue chain is Protein RecA (347 aa).

70–77 (GPESSGKT) is a binding site for ATP.

It belongs to the RecA family.

It localises to the cytoplasm. Can catalyze the hydrolysis of ATP in the presence of single-stranded DNA, the ATP-dependent uptake of single-stranded DNA by duplex DNA, and the ATP-dependent hybridization of homologous single-stranded DNAs. It interacts with LexA causing its activation and leading to its autocatalytic cleavage. The protein is Protein RecA of Ruegeria pomeroyi (strain ATCC 700808 / DSM 15171 / DSS-3) (Silicibacter pomeroyi).